Here is a 685-residue protein sequence, read N- to C-terminus: ATP-dependent RNA helicase MSS116, mitochondrial (685 aa).

Residues 1 to 34 constitute a mitochondrion transit peptide; that stretch reads MLVLQRIPKRALQFNGVTGTVCSTRLFHHAFNLN. Residues 42–107 are disordered; the sequence is SEERRYRNSN…NNGSRRRYQD (66 aa). Low complexity predominate over residues 58–69; sequence SDSNSNNKYRNS. Residues 70–86 are compositionally biased toward basic and acidic residues; the sequence is SYDDNRSRSNYGGDKRN. Low complexity predominate over residues 88-99; that stretch reads RNNNNYGNNRNN. The short motif at 138–166 is the Q motif element; sequence SLLEESLLDANVHKAISAMKFESLTPVQQ. A Helicase ATP-binding domain is found at 170–357; that stretch reads KPILTTENDV…ATIMNKKDCL (188 aa). 183-190 serves as a coordination point for ATP; it reads AKTGTGKT. The DEAD box signature appears at 298–301; sequence DEAD. The Helicase C-terminal domain occupies 386 to 542; that stretch reads SMVALIQSIE…EDYLNQDKEN (157 aa). Residues 633-685 form a disordered region; sequence DREFDDEDRYTSRSQNNYKSKQSSKSNRFEGRNDYSNSRRSHANQKRNFTFDD. Residues 644–658 are compositionally biased toward low complexity; sequence SRSQNNYKSKQSSKS.

It belongs to the DEAD box helicase family. DDX18/HAS1 subfamily.

The protein resides in the mitochondrion matrix. It catalyses the reaction ATP + H2O = ADP + phosphate + H(+). In terms of biological role, ATP-dependent RNA helicase required for mitochondrial splicing of group I and II introns. Also required for efficient mitochondrial translation. This chain is ATP-dependent RNA helicase MSS116, mitochondrial (MSS116), found in Kluyveromyces lactis (strain ATCC 8585 / CBS 2359 / DSM 70799 / NBRC 1267 / NRRL Y-1140 / WM37) (Yeast).